A 252-amino-acid chain; its full sequence is Geranylgeranylglyceryl phosphate synthase (252 aa).

Mg(2+)-binding residues include Asp-26 and Ser-55. Sn-glycerol 1-phosphate-binding positions include 174–180 (YLEAGSG), 205–206 (GG), and 227–228 (GT).

It belongs to the GGGP/HepGP synthase family. Group II subfamily. As to quaternary structure, homotetramer. Homohexamer. Mg(2+) is required as a cofactor.

Its subcellular location is the cytoplasm. It catalyses the reaction sn-glycerol 1-phosphate + (2E,6E,10E)-geranylgeranyl diphosphate = sn-3-O-(geranylgeranyl)glycerol 1-phosphate + diphosphate. The protein operates within membrane lipid metabolism; glycerophospholipid metabolism. In terms of biological role, prenyltransferase that catalyzes the transfer of the geranylgeranyl moiety of geranylgeranyl diphosphate (GGPP) to the C3 hydroxyl of sn-glycerol-1-phosphate (G1P). This reaction is the first ether-bond-formation step in the biosynthesis of archaeal membrane lipids. The polypeptide is Geranylgeranylglyceryl phosphate synthase (Thermococcus kodakarensis (strain ATCC BAA-918 / JCM 12380 / KOD1) (Pyrococcus kodakaraensis (strain KOD1))).